A 103-amino-acid chain; its full sequence is MYAVFQSGGKQHRVSEGQVVRLEKLEIATGEKVEFDSVLMVVNGEDVKIGAPVVAGAKVVAEVVAQGRGDKVKIVKFRRRKHSRKQQGHRQWFTEVKITGIQA.

The protein belongs to the bacterial ribosomal protein bL21 family. As to quaternary structure, part of the 50S ribosomal subunit. Contacts protein L20.

In terms of biological role, this protein binds to 23S rRNA in the presence of protein L20. The polypeptide is Large ribosomal subunit protein bL21 (Actinobacillus pleuropneumoniae serotype 5b (strain L20)).